Reading from the N-terminus, the 70-residue chain is Putative defensin-like protein 73 (70 aa).

A signal peptide spans 1 to 29; that stretch reads MNCKIEFMSFLVMTSIVILFLFVSGKVEA. 4 disulfide bridges follow: C33-C68, C37-C57, C43-C66, and C47-C67.

The protein belongs to the DEFL family.

The protein resides in the secreted. The polypeptide is Putative defensin-like protein 73 (LCR44) (Arabidopsis thaliana (Mouse-ear cress)).